A 69-amino-acid polypeptide reads, in one-letter code: Large ribosomal subunit protein uL29 (69 aa).

The protein belongs to the universal ribosomal protein uL29 family.

This is Large ribosomal subunit protein uL29 from Carboxydothermus hydrogenoformans (strain ATCC BAA-161 / DSM 6008 / Z-2901).